Here is an 88-residue protein sequence, read N- to C-terminus: UPF0213 protein SAG0778 (88 aa).

A GIY-YIG domain is found at 4–80; sequence VPAYMYVLEC…QKTRQAKLTY (77 aa).

Belongs to the UPF0213 family.

The polypeptide is UPF0213 protein SAG0778 (Streptococcus agalactiae serotype V (strain ATCC BAA-611 / 2603 V/R)).